We begin with the raw amino-acid sequence, 316 residues long: tRNA uridine(34) hydroxylase (316 aa).

Positions 123–217 (LDEDTVVIDA…YGKNPETRGE (95 aa)) constitute a Rhodanese domain. The Cysteine persulfide intermediate role is filled by cysteine 177.

Belongs to the TrhO family.

The catalysed reaction is uridine(34) in tRNA + AH2 + O2 = 5-hydroxyuridine(34) in tRNA + A + H2O. Functionally, catalyzes oxygen-dependent 5-hydroxyuridine (ho5U) modification at position 34 in tRNAs. The chain is tRNA uridine(34) hydroxylase from Enterococcus faecalis (strain ATCC 700802 / V583).